Here is a 290-residue protein sequence, read N- to C-terminus: Ankyrin repeat and SOCS box protein 9 (290 aa).

Met1 carries the N-acetylmethionine modification. Residues Met1–Arg11 are compositionally biased toward basic and acidic residues. Residues Met1–Phe20 are disordered. 6 ANK repeats span residues Ser31 to Ile60, Asp64 to Gly93, Asp97 to Pro126, Glu129 to Tyr158, His162 to Gln191, and Gly194 to Ala223. The 55-residue stretch at Pro236–Leu290 folds into the SOCS box domain.

Belongs to the ankyrin SOCS box (ASB) family. Substrate-recognition component of the ECS(ASB9) complex, composed of ASB9, CUL5, ELOB, ELOC and RNF7/RBX2.

Its subcellular location is the mitochondrion. The protein operates within protein modification; protein ubiquitination. Functionally, substrate-recognition component of a cullin-5-RING E3 ubiquitin-protein ligase complex (ECS complex, also named CRL5 complex), which mediates the ubiquitination and subsequent proteasomal degradation of target proteins. The ECS(ASB9) complex catalyzes ubiquitination of creatine kinases CKB and CKMT1A. This is Ankyrin repeat and SOCS box protein 9 from Mus musculus (Mouse).